The following is a 485-amino-acid chain: MATALPRTLGELQLYRILQKANLLSYFGAFIQQGGDDVQQLCEAGEEEFLEIMALVGMASKPLHVRRLQKALRDWVTNPGLFNQPLTSLPVSSIPIYKLPKGSPTWLGISCNSYERNSSAREPHLKIPKCAATTCVQSLGQGKSEVGSLAVQSVSESRLWQGHHATESEHSLSPADVGSPASPKESSEALDAAAALSVAECVERMASTLPKSDLNEVKELLKNNKKLAKMIGHIFEMSDEDPHKEEEIRKYSAIYGRFDSKRKDGKHLTLHELTVNEAAAQLCVKDNALLTRRDELFALARQVSREVTYKYTYRTTRLKCGERDELSPKRIKVEDGFPDFQEPVQTLFQQARAKSEELAALSSQQTEKGMAKQMELLCAQASYERLQQERRLTAGLYRQSSGEHSPDGLPSDGSDGQGERPLNLRMPNVQNRQPHHFVADGELSRLYSSEAKSHSSENLGILKDYPHSAFTLEKKVIKTEPEDSR.

The NCD1 stretch occupies residues 4–82 (ALPRTLGELQ…RDWVTNPGLF (79 aa)). Residues K126, K129, and K143 each participate in a glycyl lysine isopeptide (Lys-Gly) (interchain with G-Cter in SUMO2) cross-link. Residues 160 to 187 (WQGHHATESEHSLSPADVGSPASPKESS) form a disordered region. Phosphoserine is present on residues S171 and S182. K211 is covalently cross-linked (Glycyl lysine isopeptide (Lys-Gly) (interchain with G-Cter in SUMO2)). The tract at residues 220-309 (LLKNNKKLAK…ARQVSREVTY (90 aa)) is NCD2. The tract at residues 306–337 (EVTYKYTYRTTRLKCGERDELSPKRIKVEDGF) is necessary for nuclear localization. Residue S327 is modified to Phosphoserine. A Glycyl lysine isopeptide (Lys-Gly) (interchain with G-Cter in SUMO1); alternate cross-link involves residue K332. Residue K332 forms a Glycyl lysine isopeptide (Lys-Gly) (interchain with G-Cter in SUMO2); alternate linkage. Glycyl lysine isopeptide (Lys-Gly) (interchain with G-Cter in SUMO2) cross-links involve residues K354, K368, and K372. Residues 398 to 432 (RQSSGEHSPDGLPSDGSDGQGERPLNLRMPNVQNR) form a disordered region. Phosphoserine is present on S405. Glycyl lysine isopeptide (Lys-Gly) (interchain with G-Cter in SUMO2) cross-links involve residues K452, K463, and K475. Residue K478 forms a Glycyl lysine isopeptide (Lys-Gly) (interchain with G-Cter in SUMO1); alternate linkage. K478 is covalently cross-linked (Glycyl lysine isopeptide (Lys-Gly) (interchain with G-Cter in SUMO2); alternate).

The protein belongs to the NAB family. As to quaternary structure, homomultimers may associate with EGR1 bound to DNA.

The protein localises to the nucleus. Acts as a transcriptional repressor for zinc finger transcription factors EGR1 and EGR2. This chain is NGFI-A-binding protein 1 (NAB1), found in Mesocricetus auratus (Golden hamster).